The sequence spans 281 residues: CLA biosynthesis isomerase (281 aa).

The protein belongs to the ADC family.

The protein resides in the cytoplasm. It catalyses the reaction 10-oxo-(12Z)-octadecenoate = 10-oxo-(11E)-octadecenoate. The protein operates within lipid metabolism; fatty acid metabolism. Is involved in a saturation metabolic pathway of polyunsaturated fatty acids, that detoxifies unsaturated fatty acids and generates hydroxy fatty acids, oxo fatty acids, conjugated fatty acids such as conjugated linoleic acids (CLAs), and partially saturated trans-fatty acids as intermediates. CLA-DC catalyzes the migration of the carbon-carbon double bond in 10-oxo-(12Z)-octadecenoate to produce 10-oxo-(11E)-octadecenoate, during linoleate metabolism. As part of the gut microbiome, this enzyme modifies host fatty acid composition and is expected to improve human health by altering lipid metabolism related to the onset of metabolic syndrome. The sequence is that of CLA biosynthesis isomerase from Lactiplantibacillus plantarum (Lactobacillus plantarum).